A 341-amino-acid chain; its full sequence is Homeobox protein mls-2 (341 aa).

Disordered regions lie at residues 1–78 (MPTS…DSTN) and 139–209 (SNPD…TVFS). Positions 64-78 (TTQSSPSASSEDSTN) are enriched in polar residues. Basic and acidic residues predominate over residues 153 to 166 (KDEKSEGKDGETRD). Residues 201–260 (KKKTRTVFSRSQVSQLEMMFECKRYLSSQERSNLAQKLHLTETQVKIWFQNRRNKFKRQA) constitute a DNA-binding region (homeobox).

Belongs to the HMX homeobox family. Expressed in a subset of head neurons, including AIM and ASK (at protein level).

It is found in the nucleus. Transcription factor that binds to the promoter of target genes. Regulates fate specification and/or differentiation of multiple cell types arising from the embryonic mesodermal (M) lineage and the ABp(l/r)paa precursors. In the postembryonic M lineage, regulates cleavage orientation, cell proliferation and cell fate specification. Regulates hlh-1 expression to specify coelomocyte fate in the mesodermal (M) lineage. In AWC neurons, initiates expression of ceh-36, leading to the expression of terminal differentiation genes. Regulates ventral cephalic sheath (CEPsh) glia differentiation and expression of transcription factor hlh-17 in CEPsh glia. Promotes terminal differentiation and morphogenesis of the epithelial duct and pore cells. In the duct cell, cooperates with the EGF-Ras-ERK pathway in turning on the terminal differentiation gene lin-48. The sequence is that of Homeobox protein mls-2 from Caenorhabditis elegans.